The following is a 69-amino-acid chain: DNA-directed RNA polymerase subunit epsilon (69 aa).

This sequence belongs to the RNA polymerase subunit epsilon family. In terms of assembly, RNAP is composed of a core of 2 alpha, a beta and a beta' subunit. The core is associated with a delta subunit, and at least one of epsilon or omega. When a sigma factor is associated with the core the holoenzyme is formed, which can initiate transcription.

The enzyme catalyses RNA(n) + a ribonucleoside 5'-triphosphate = RNA(n+1) + diphosphate. Functionally, a non-essential component of RNA polymerase (RNAP). This is DNA-directed RNA polymerase subunit epsilon from Listeria monocytogenes serotype 4b (strain CLIP80459).